The sequence spans 329 residues: DNA-directed RNA polymerase subunit alpha (329 aa).

The interval 1 to 235 (MQNSIMDFLR…EQLEAFVDLR (235 aa)) is alpha N-terminal domain (alpha-NTD). The segment at 249 to 329 (FEPILLRPVD…NWPPSSILDE (81 aa)) is alpha C-terminal domain (alpha-CTD).

Belongs to the RNA polymerase alpha chain family. Homodimer. The RNAP catalytic core consists of 2 alpha, 1 beta, 1 beta' and 1 omega subunit. When a sigma factor is associated with the core the holoenzyme is formed, which can initiate transcription.

The catalysed reaction is RNA(n) + a ribonucleoside 5'-triphosphate = RNA(n+1) + diphosphate. Its function is as follows. DNA-dependent RNA polymerase catalyzes the transcription of DNA into RNA using the four ribonucleoside triphosphates as substrates. This is DNA-directed RNA polymerase subunit alpha from Buchnera aphidicola subsp. Acyrthosiphon pisum (strain APS) (Acyrthosiphon pisum symbiotic bacterium).